Consider the following 369-residue polypeptide: MATLDVNPQRYQEQLAEKVERLTDMFAPYNVPELEVFESPEQHYRMRAEFRVWHEGEDLYYIMFNQETREKYRVDQFPAASRLINDLMPLLVEAMKDNESLRRKLFQVDFLSTLSGEILVSLLYHRQLDEEWIENAKALKQRLNDEGFNLNIIGRARKMKIILDRDYVIEKLDVNGQSYIYQQVENSFTQPNGKVAEKMLEWAVDCTQESTGDLLELYCGNGNFSLALAQNFDRVLATELAKPSVESAQYNIAANKIDNVQIIRMSAEEFTEAMEGKREFRRLKDNGVDLKSYNCNTIFVDPPRAGMDVDTCKMVQGYERIMYISCNPETLKENLDILSETHNVTRFALFDQFPYTHHMEAGVLLERKA.

Gln190, Tyr218, Asn223, Glu239, and Asp301 together coordinate S-adenosyl-L-methionine. Cys326 serves as the catalytic Nucleophile. Glu360 (proton acceptor) is an active-site residue.

Belongs to the class I-like SAM-binding methyltransferase superfamily. RNA M5U methyltransferase family. TrmA subfamily.

The catalysed reaction is uridine(54) in tRNA + S-adenosyl-L-methionine = 5-methyluridine(54) in tRNA + S-adenosyl-L-homocysteine + H(+). It carries out the reaction uridine(341) in tmRNA + S-adenosyl-L-methionine = 5-methyluridine(341) in tmRNA + S-adenosyl-L-homocysteine + H(+). Functionally, dual-specificity methyltransferase that catalyzes the formation of 5-methyluridine at position 54 (m5U54) in all tRNAs, and that of position 341 (m5U341) in tmRNA (transfer-mRNA). This Vibrio parahaemolyticus serotype O3:K6 (strain RIMD 2210633) protein is tRNA/tmRNA (uracil-C(5))-methyltransferase.